We begin with the raw amino-acid sequence, 146 residues long: Bradykinin-like neuropeptide (146 aa).

Positions 1-24 (MTSSIYGFITLSVVALISQTTCRS) are cleaved as a signal peptide. Propeptides lie at residues 25–80 (LDLL…LMEA) and 92–146 (LRSY…FRYG).

In terms of tissue distribution, neuron L5.

Its subcellular location is the secreted. Its function is as follows. May have important functions in renal physiology and in animal behavior, as does bradykinin. The protein is Bradykinin-like neuropeptide (LUQ-1) of Aplysia californica (California sea hare).